Here is a 154-residue protein sequence, read N- to C-terminus: 6,7-dimethyl-8-ribityllumazine synthase (154 aa).

Residues W23, 57 to 59, and 81 to 83 each bind 5-amino-6-(D-ribitylamino)uracil; these read AFE and AVI. 86–87 is a (2S)-2-hydroxy-3-oxobutyl phosphate binding site; it reads AT. H89 (proton donor) is an active-site residue. Residue F114 participates in 5-amino-6-(D-ribitylamino)uracil binding. R128 is a binding site for (2S)-2-hydroxy-3-oxobutyl phosphate.

Belongs to the DMRL synthase family.

It carries out the reaction (2S)-2-hydroxy-3-oxobutyl phosphate + 5-amino-6-(D-ribitylamino)uracil = 6,7-dimethyl-8-(1-D-ribityl)lumazine + phosphate + 2 H2O + H(+). It participates in cofactor biosynthesis; riboflavin biosynthesis; riboflavin from 2-hydroxy-3-oxobutyl phosphate and 5-amino-6-(D-ribitylamino)uracil: step 1/2. Functionally, catalyzes the formation of 6,7-dimethyl-8-ribityllumazine by condensation of 5-amino-6-(D-ribitylamino)uracil with 3,4-dihydroxy-2-butanone 4-phosphate. This is the penultimate step in the biosynthesis of riboflavin. The polypeptide is 6,7-dimethyl-8-ribityllumazine synthase (Sulfurimonas denitrificans (strain ATCC 33889 / DSM 1251) (Thiomicrospira denitrificans (strain ATCC 33889 / DSM 1251))).